The sequence spans 255 residues: Syntaxin-23 (255 aa).

A disordered region spans residues 1–31 (MSFQDLEAGRGRSLASSRNINGGGSRQDTTQ). Residue Ser2 is modified to N-acetylserine. The span at 14 to 31 (LASSRNINGGGSRQDTTQ) shows a compositional bias: polar residues. In terms of domain architecture, t-SNARE coiled-coil homology spans 184–246 (EAVIEEREQG…AQGKSHLVRH (63 aa)).

It belongs to the syntaxin family. In terms of assembly, part of the t-SNARE complex. Interacts with RGS1. As to expression, expressed at higher levels in leaves, flowers and stems than in roots.

The protein resides in the membrane. Its function is as follows. May function in the docking or fusion of transport vesicles with the prevacuolar membrane. The chain is Syntaxin-23 (SYP23) from Arabidopsis thaliana (Mouse-ear cress).